The following is a 307-amino-acid chain: Estrogen receptor (307 aa).

A DNA-binding region (nuclear receptor) is located at residues 1–43 (GHNDYMCPATNQCTIDKNRRKSCQACRLRKCYEVGMMKGGIRK). The NR C4-type zinc finger occupies 7–31 (CPATNQCTIDKNRRKSCQACRLRKC). Residues 44 to 95 (DRRGGRILKHKRQREEHDNRNAGAIVERRSPNLWPSPLMITHNKKNSPALSL) form a hinge region. An NR LBD domain is found at 96 to 307 (TADQIVSALL…HFRHMSNKGM (212 aa)).

Belongs to the nuclear hormone receptor family. NR3 subfamily. Binds DNA as a homodimer. Can form a heterodimer with ER-beta.

The protein localises to the nucleus. In terms of biological role, the steroid hormones and their receptors are involved in the regulation of eukaryotic gene expression and affect cellular proliferation and differentiation in target tissues. The protein is Estrogen receptor (ESR1) of Aspidoscelis uniparens (Desert grassland whiptail lizard).